We begin with the raw amino-acid sequence, 177 residues long: B9 domain-containing protein 2 (177 aa).

The region spanning 2-118 is the C2 B9-type domain; the sequence is AEVHIIGQIL…EIGTWKVAPN (117 aa).

Belongs to the B9D family. In terms of assembly, probable component of the tectonic-like complex (also named MKS complex), composed of B9d1, B9d2, Cc2d2a, Mks1 and tctn. As to expression, expressed in chordotonal neurons in the antennae (at protein level). Expressed in spermatids (at protein level).

It is found in the cytoplasm. It localises to the cytoskeleton. The protein resides in the cilium basal body. Probable component of the tectonic-like complex (also named MKS complex), a complex localized at the transition zone of primary cilia. Has a role in ciliary structure and function. This is B9 domain-containing protein 2 from Drosophila melanogaster (Fruit fly).